The primary structure comprises 400 residues: Enoyl-[acyl-carrier-protein] reductase [NADH] (400 aa).

NAD(+)-binding positions include 48–53 (GSSSGY), 74–75 (FE), 111–112 (DA), and 139–140 (LA). Position 225 (Tyr-225) interacts with substrate. Tyr-235 functions as the Proton donor in the catalytic mechanism. NAD(+)-binding positions include Lys-244 and 273–275 (VVT).

Belongs to the TER reductase family. Monomer.

It catalyses the reaction a 2,3-saturated acyl-[ACP] + NAD(+) = a (2E)-enoyl-[ACP] + NADH + H(+). It participates in lipid metabolism; fatty acid biosynthesis. Its function is as follows. Involved in the final reduction of the elongation cycle of fatty acid synthesis (FAS II). Catalyzes the reduction of a carbon-carbon double bond in an enoyl moiety that is covalently linked to an acyl carrier protein (ACP). The polypeptide is Enoyl-[acyl-carrier-protein] reductase [NADH] (Shewanella baltica (strain OS185)).